Here is a 303-residue protein sequence, read N- to C-terminus: Probable cell division protein WhiA (303 aa).

Residues 272–303 (SIQQLADSLSTPLTKSGVNHRLRKINKIADEL) constitute a DNA-binding region (H-T-H motif).

This sequence belongs to the WhiA family.

In terms of biological role, involved in cell division and chromosome segregation. This is Probable cell division protein WhiA from Streptococcus pneumoniae serotype 2 (strain D39 / NCTC 7466).